The following is a 345-amino-acid chain: Holliday junction branch migration complex subunit RuvB (345 aa).

The interval 4–182 (PDRIVSAVQR…FGIPIRLEFY (179 aa)) is large ATPase domain (RuvB-L). ATP contacts are provided by residues arginine 22, glycine 63, lysine 66, threonine 67, threonine 68, 129–131 (EDY), arginine 172, tyrosine 182, and arginine 219. Threonine 67 serves as a coordination point for Mg(2+). Residues 183–253 (TVDELQAIVT…IADAALSRLE (71 aa)) form a small ATPAse domain (RuvB-S) region. Residues 256–345 (ALGLDQLDRR…QSQINLFEEE (90 aa)) are head domain (RuvB-H). DNA contacts are provided by arginine 292, arginine 311, and arginine 316.

Belongs to the RuvB family. In terms of assembly, homohexamer. Forms an RuvA(8)-RuvB(12)-Holliday junction (HJ) complex. HJ DNA is sandwiched between 2 RuvA tetramers; dsDNA enters through RuvA and exits via RuvB. An RuvB hexamer assembles on each DNA strand where it exits the tetramer. Each RuvB hexamer is contacted by two RuvA subunits (via domain III) on 2 adjacent RuvB subunits; this complex drives branch migration. In the full resolvosome a probable DNA-RuvA(4)-RuvB(12)-RuvC(2) complex forms which resolves the HJ.

The protein localises to the cytoplasm. It catalyses the reaction ATP + H2O = ADP + phosphate + H(+). Its function is as follows. The RuvA-RuvB-RuvC complex processes Holliday junction (HJ) DNA during genetic recombination and DNA repair, while the RuvA-RuvB complex plays an important role in the rescue of blocked DNA replication forks via replication fork reversal (RFR). RuvA specifically binds to HJ cruciform DNA, conferring on it an open structure. The RuvB hexamer acts as an ATP-dependent pump, pulling dsDNA into and through the RuvAB complex. RuvB forms 2 homohexamers on either side of HJ DNA bound by 1 or 2 RuvA tetramers; 4 subunits per hexamer contact DNA at a time. Coordinated motions by a converter formed by DNA-disengaged RuvB subunits stimulates ATP hydrolysis and nucleotide exchange. Immobilization of the converter enables RuvB to convert the ATP-contained energy into a lever motion, pulling 2 nucleotides of DNA out of the RuvA tetramer per ATP hydrolyzed, thus driving DNA branch migration. The RuvB motors rotate together with the DNA substrate, which together with the progressing nucleotide cycle form the mechanistic basis for DNA recombination by continuous HJ branch migration. Branch migration allows RuvC to scan DNA until it finds its consensus sequence, where it cleaves and resolves cruciform DNA. The polypeptide is Holliday junction branch migration complex subunit RuvB (Chelativorans sp. (strain BNC1)).